Here is a 261-residue protein sequence, read N- to C-terminus: Thiamine thiazole synthase (261 aa).

NAD(+) contacts are provided by residues alanine 33, glutamate 52–arginine 53, glycine 60, valine 124, and histidine 152–aspartate 154. 2 residues coordinate Fe cation: aspartate 154 and histidine 169. An NAD(+)-binding site is contributed by methionine 219. Arginine 229 contributes to the glycine binding site.

The protein belongs to the THI4 family. As to quaternary structure, homooctamer; tetramer of dimers. Requires Fe(2+) as cofactor.

The enzyme catalyses hydrogen sulfide + glycine + NAD(+) = ADP-5-ethyl-4-methylthiazole-2-carboxylate + nicotinamide + 3 H2O + H(+). The protein operates within cofactor biosynthesis; thiamine diphosphate biosynthesis. Its function is as follows. Involved in the biosynthesis of the thiazole moiety of thiamine. Catalyzes the conversion of NAD and glycine to adenosine diphosphate 5-(2-hydroxyethyl)-4-methylthiazole-2-carboxylate (ADT), an adenylated thiazole intermediate, using free sulfide as a source of sulfur. The sequence is that of Thiamine thiazole synthase from Pyrobaculum islandicum (strain DSM 4184 / JCM 9189 / GEO3).